A 190-amino-acid chain; its full sequence is Ubiquinol-cytochrome c reductase iron-sulfur subunit (190 aa).

The helical transmembrane segment at 18 to 39 threads the bilayer; sequence FLYYATAGAGTVAAGAAAWTLV. Residues 95-188 form the Rieske domain; that stretch reads GQLIDRSAQN…AEFLDDTTIK (94 aa). The [2Fe-2S] cluster site is built by Cys-132, His-134, Cys-152, and His-155. Cys-137 and Cys-154 are disulfide-bonded.

It belongs to the Rieske iron-sulfur protein family. As to quaternary structure, the main subunits of complex b-c1 are: cytochrome b, cytochrome c1 and the Rieske protein. [2Fe-2S] cluster serves as cofactor.

It localises to the cell membrane. It catalyses the reaction a quinol + 2 Fe(III)-[cytochrome c](out) = a quinone + 2 Fe(II)-[cytochrome c](out) + 2 H(+)(out). Its function is as follows. Component of the ubiquinol-cytochrome c reductase complex (complex III or cytochrome b-c1 complex), which is a respiratory chain that generates an electrochemical potential coupled to ATP synthesis. The protein is Ubiquinol-cytochrome c reductase iron-sulfur subunit (petA) of Paracoccus denitrificans.